The primary structure comprises 899 residues: Core protein VP3 (899 aa).

The tract at residues 1–21 (MADPPDANVPKTSPYLKGDEL) is disordered.

It belongs to the orbivirus VP3 family.

It localises to the virion. The VP3 protein is one of the five proteins (with VP1, VP4, VP6 and VP7) which form the inner capsid of the virus. The chain is Core protein VP3 (Segment-3) from Epizootic hemorrhagic disease virus 1 (EHDV-1).